Reading from the N-terminus, the 1836-residue chain is InaD-like protein (1836 aa).

An L27 domain is found at 1 to 65; it reads MPENPAAEKM…SIKQLKGQLS (65 aa). PDZ domains lie at 134 to 221, 248 to 328, and 365 to 453; these read YIDI…AREV, DVEL…ARDP, and NVEL…VRRK. Serine 455, serine 459, and serine 482 each carry phosphoserine. A compositionally biased stretch (polar residues) spans 456 to 466; the sequence is LSASPFEQPSS. The segment at 456–492 is disordered; that stretch reads LSASPFEQPSSREAVAEPPEVPELTGSLKPETNSRME. In terms of domain architecture, PDZ 4 spans 555-641; the sequence is DEELQKYSKL…PFTLVCCRRL (87 aa). Serine 647 is modified (phosphoserine). 2 PDZ domains span residues 687-773 and 1074-1166; these read TVEL…ICKP and PRIV…VVQS. Residues 1173 to 1191 are compositionally biased toward polar residues; that stretch reads VIPSVNNKGKTPPQNQDQN. The disordered stretch occupies residues 1173-1232; it reads VIPSVNNKGKTPPQNQDQNTQEKKAKRHGTAPPPMKLPPPYRAPSADTEESEEDSALTDK. Positions 1203–1214 are enriched in pro residues; that stretch reads APPPMKLPPPYR. A Phosphoserine modification is found at serine 1217. Acidic residues predominate over residues 1219 to 1228; sequence DTEESEEDSA. The region spanning 1245-1328 is the PDZ 7 domain; that stretch reads LHIIELEKDK…PTRVKLVFIR (84 aa). The interval 1341-1448 is disordered; that stretch reads FPVPSHSPSP…ADVTGSGNFQ (108 aa). Over residues 1372 to 1383 the composition is skewed to basic and acidic residues; sequence PLPERESSKPED. Polar residues-rich tracts occupy residues 1415 to 1426 and 1434 to 1448; these read YSAQVSSSSQEI and CQST…GNFQ. 2 consecutive PDZ domains span residues 1472–1555 and 1568–1650; these read EMII…VIYR and VFLV…EIGR. A Phosphothreonine modification is found at threonine 1545. Residues 1657–1678 are disordered; it reads ASSRKTSQNSQGDQHSAHSSCR. Residues 1709 to 1795 enclose the PDZ 10 domain; the sequence is PRTVEIIREL…FGRIILQVVA (87 aa). Residues 1813–1836 form a disordered region; that stretch reads SQLGSPTADRHPQDPEELLQRTAD.

As to quaternary structure, forms a ternary complex with PALS1 and CRB1. Component of a complex whose core is composed of ARHGAP17, AMOT, PALS1, INADL/PATJ and PARD3/PAR3. Forms a heterotrimeric complex composed of MMP5, LIN7B and PATJ; the N-terminal L27 domain of PALS1 interacts with the L27 domain of PATJ and the C-terminal L27 domain of PALS1 interacts with the L27 domain of LIN7B. Component of a complex composed of CRB3, PALS1 and PATJ. As part of the Crumbs complex; interacts with WWP1, the interaction is enhanced by AMOTL2 and facilitates WWP1 localization to the plasma membrane. The Crumbs complex promotes monoubiquitination of AMOTL2 by WWP1, which activates the Hippo signaling pathway. Interacts (via N-terminus) with PALS1/PALS (via PDZ domain). Interacts with TJP3/ZO-3 and CLDN1/claudin-1. Interacts with ASIC3, KCNJ10, KCNJ15, GRIN2A, GRIN2B, GRIN2C, GRIN2D, NLGN2, and HTR2A. Interacts with MPP7. Directly interacts with HTR4. Interacts (via PDZ domain 8) with WWC1 (via the ADDV motif). Interacts with SLC6A4. Interacts (via C-terminus) with ARHGEF18. Interacts with NPHP1. Interacts with PARD3/PAR3. Interacts (via PDZ1-6 domains) with TJP1/ZO1; the interaction is required for attachment and extension of TJP1/ZO1 condensates along the apical cell interface. Abundantly expressed in germ cells, also expressed in testes and seminiferous tubules, with faint expression in Sertoli cells (at protein level).

Its subcellular location is the cell junction. The protein resides in the tight junction. It is found in the apical cell membrane. The protein localises to the cytoplasm. It localises to the perinuclear region. Its function is as follows. Scaffolding protein that facilitates the localization of proteins to the cell membrane. Required for the correct formation of tight junctions and epithelial apico-basal polarity. Acts (via its L27 domain) as an apical connector and elongation factor for multistranded TJP1/ZO1 condensates that form a tight junction belt, thereby required for the formation of the tight junction-mediated cell barrier. Positively regulates epithelial cell microtubule elongation and cell migration, possibly via facilitating localization of PRKCI/aPKC and PAR3D/PAR3 at the leading edge of migrating cells. Plays a role in the correct reorientation of the microtubule-organizing center during epithelial migration. May regulate the surface expression and/or function of ASIC3 in sensory neurons. May recruit ARHGEF18 to apical cell-cell boundaries. This Rattus norvegicus (Rat) protein is InaD-like protein.